The chain runs to 142 residues: Hemoglobin subunit alpha (142 aa).

The Globin domain occupies 2–142 (VLSAADKNNV…VSTVLTSKYR (141 aa)). Ser-4 carries the phosphoserine modification. N6-succinyllysine is present on residues Lys-8 and Lys-12. Residue Lys-17 is modified to N6-acetyllysine; alternate. Lys-17 is subject to N6-succinyllysine; alternate. A Phosphotyrosine modification is found at Tyr-25. Ser-36 is modified (phosphoserine). An N6-succinyllysine modification is found at Lys-41. Ser-50 carries the phosphoserine modification. His-59 contacts O2. His-88 lines the heme b pocket. Phosphothreonine is present on Thr-109. Phosphoserine is present on residues Ser-125 and Ser-132. Phosphothreonine is present on residues Thr-135 and Thr-138. Position 139 is a phosphoserine (Ser-139).

It belongs to the globin family. Heterotetramer of two alpha chains and two beta chains. As to expression, red blood cells.

Involved in oxygen transport from the lung to the various peripheral tissues. Functionally, hemopressin acts as an antagonist peptide of the cannabinoid receptor CNR1. Hemopressin-binding efficiently blocks cannabinoid receptor CNR1 and subsequent signaling. This Cavia porcellus (Guinea pig) protein is Hemoglobin subunit alpha (HBA).